The sequence spans 275 residues: Bis(5'-nucleosyl)-tetraphosphatase, symmetrical (275 aa).

It belongs to the Ap4A hydrolase family.

The enzyme catalyses P(1),P(4)-bis(5'-adenosyl) tetraphosphate + H2O = 2 ADP + 2 H(+). Functionally, hydrolyzes diadenosine 5',5'''-P1,P4-tetraphosphate to yield ADP. In Nitrosospira multiformis (strain ATCC 25196 / NCIMB 11849 / C 71), this protein is Bis(5'-nucleosyl)-tetraphosphatase, symmetrical.